Consider the following 79-residue polypeptide: Cytochrome b (79 aa).

3 consecutive transmembrane segments (helical) span residues 1 to 7 (SALFLAM), 31 to 52 (WLIR…YLHI), and 67 to 79 (WNIG…LTMA). Heme b contacts are provided by His-37 and His-51.

The protein belongs to the cytochrome b family. As to quaternary structure, the cytochrome bc1 complex contains 11 subunits: 3 respiratory subunits (MT-CYB, CYC1 and UQCRFS1), 2 core proteins (UQCRC1 and UQCRC2) and 6 low-molecular weight proteins (UQCRH/QCR6, UQCRB/QCR7, UQCRQ/QCR8, UQCR10/QCR9, UQCR11/QCR10 and a cleavage product of UQCRFS1). This cytochrome bc1 complex then forms a dimer. Heme b is required as a cofactor.

It localises to the mitochondrion inner membrane. Its function is as follows. Component of the ubiquinol-cytochrome c reductase complex (complex III or cytochrome b-c1 complex) that is part of the mitochondrial respiratory chain. The b-c1 complex mediates electron transfer from ubiquinol to cytochrome c. Contributes to the generation of a proton gradient across the mitochondrial membrane that is then used for ATP synthesis. The protein is Cytochrome b (MT-CYB) of Dipodomys panamintinus (Panamint kangaroo rat).